A 929-amino-acid polypeptide reads, in one-letter code: Band 3 anion transport protein (929 aa).

Methionine 1 is subject to N-acetylmethionine. At 1 to 422 the chain is on the cytoplasmic side; the sequence is MGDMRDHEEV…LSDITDALSP (422 aa). A Phosphoserine modification is found at serine 18. Residues tyrosine 31 and tyrosine 56 each carry the phosphotyrosine modification. The tract at residues 46–67 is disordered; the sequence is ALPTEQTATDYVPSSTSTPHPS. Over residues 58 to 67 the composition is skewed to low complexity; the sequence is PSSTSTPHPS. Positions 69 to 303 are globular; it reads GQVYVELQEL…LGRAAATLMT (235 aa). The segment at 190–199 is interaction with ANK1; sequence AVLTRSGGAS. A phosphoserine mark is found at serine 199, serine 222, and serine 363. The interval 317–370 is dimerization arm; sequence REELLRSLESFLDCSLVLPPTDAPSEKALLNLVPVQKELLRRRYLPSPAKPDPN. The tract at residues 366–389 is disordered; the sequence is KPDPNLYNTLDLNGGKGGPGDEDD. Tyrosine 372 carries the post-translational modification Phosphotyrosine. Threonine 374 carries the phosphothreonine modification. Residues 423 to 446 traverse the membrane as a helical segment; sequence QVLAAVIFIYFAALSPAVTFGGLL. The Extracellular segment spans residues 447-454; it reads GEKTRNLM. Residues 455–475 traverse the membrane as a helical segment; it reads GVSELLISTAVQGILFALLGA. Over 476–478 the chain is Cytoplasmic; that stretch reads QPL. A discontinuously helical transmembrane segment spans residues 479–495; that stretch reads LVLGFSGPLLVFEEAFF. Residues 496–504 lie on the Extracellular side of the membrane; sequence SFCESNNLE. A helical transmembrane segment spans residues 505 to 525; that stretch reads YIVGRAWIGFWLILLVMLVVA. The Cytoplasmic portion of the chain corresponds to 526 to 537; it reads FEGSFLVQYISR. Residues 538 to 560 traverse the membrane as a helical segment; sequence YTQEIFSFLISLIFIYETFSKLI. At 561 to 588 the chain is on the extracellular side; sequence KIFQDYPLQQTYAPVVMKPKPQGPVPNT. The helical transmembrane segment at 589 to 609 threads the bilayer; the sequence is ALFSLVLMAGTFLLAMTLRKF. Topologically, residues 610–620 are cytoplasmic; that stretch reads KNSTYFPGKLR. A helical transmembrane segment spans residues 621–641; sequence RVIGDFGVPISILIMVLVDSF. Topologically, residues 642–681 are extracellular; sequence IKGTYTQKLSVPDGLKVSNSSARGWVIHPLGLYRLFPTWM. A glycan (N-linked (GlcNAc...) asparagine) is linked at asparagine 660. A helical transmembrane segment spans residues 682–702; it reads MFASVLPALLVFILIFLESQI. Residues 703 to 718 are Cytoplasmic-facing; the sequence is TTLIVSKPERKMIKGS. Residues 719–737 traverse the membrane as a helical segment; it reads GFHLDLLLVVGMGGVAALF. A discontinuously helical membrane pass occupies residues 738-755; sequence GMPWLSATTVRSVTHANA. The Cytoplasmic segment spans residues 756–778; the sequence is LTVMGKASGPGAAAQIQEVKEQR. The next 2 membrane-spanning stretches (helical) occupy residues 779 to 799 and 800 to 818; these read ISGL…PILS and RIPL…VTSL. At 819–856 the chain is on the cytoplasmic side; it reads SGIQLFDRILLLFKPPKYHPDVPFVKRVKTWRMHLFTG. The discontinuously helical intramembrane region spans 857–887; it reads IQIICLAVLWVVKSTPASLALPFVLILTVPL. Cysteine 861 carries the S-palmitoyl cysteine lipid modification. The Cytoplasmic segment spans residues 888-929; the sequence is RRLILPLIFRELELQCLDGDDAKVTFDEENGLDEYDEVPMPV. Phosphotyrosine is present on tyrosine 922.

It belongs to the anion exchanger (TC 2.A.31) family. A dimer in solution, but in its membrane environment, it exists primarily as a mixture of dimers and tetramers and spans the membrane asymmetrically. Component of the ankyrin-1 complex in the erythrocyte, composed of ANK1, RHCE, RHAG, SLC4A1, EPB42, GYPA, GYPB and AQP1. Interacts with STOM; this interaction positively regulates SLC4A1 activity. Interacts with GYPA; a GYPA monomer is bound at each end of the SLC4A1 dimer forming a heterotetramer. Three SLC4A1 dimers (Band 3-I, Band 3-II and Band 3-III) participates in the ankyrin-1 complex. Interacts (via the cytoplasmic domain) with EPB42; this interaction is mediated by the SLC4A1 Band 3-I dimer. Interacts (via the cytoplasmic domain) directly with ANK1; this interaction is mediated by the SLC4A1 Band 3-II and Band 3-III dimers. As to quaternary structure, interacts with TMEM139. In terms of tissue distribution, detected in erythrocytes (at protein level).

It localises to the cell membrane. The protein resides in the basolateral cell membrane. The catalysed reaction is hydrogencarbonate(in) + chloride(out) = hydrogencarbonate(out) + chloride(in). In terms of biological role, functions both as a transporter that mediates electroneutral anion exchange across the cell membrane and as a structural protein. Component of the ankyrin-1 complex of the erythrocyte membrane; required for normal flexibility and stability of the erythrocyte membrane and for normal erythrocyte shape via the interactions of its cytoplasmic domain with cytoskeletal proteins, glycolytic enzymes, and hemoglobin. Functions as a transporter that mediates the 1:1 exchange of inorganic anions across the erythrocyte membrane. Mediates chloride-bicarbonate exchange in the kidney, and is required for normal acidification of the urine. This chain is Band 3 anion transport protein, found in Mus musculus (Mouse).